Consider the following 63-residue polypeptide: MRCLALLVVTLLLFTATATTGASNGMNAAASGEAPDSISLAVRDDCCPDPACRQNHPEICPSR.

Residues 1–21 (MRCLALLVVTLLLFTATATTG) form the signal peptide. A propeptide spanning residues 22–43 (ASNGMNAAASGEAPDSISLAVR) is cleaved from the precursor. Cystine bridges form between Cys46–Cys52 and Cys47–Cys60. Residues 48-50 (PDP) form a lacks the Ser-Xaa-Pro motif that is crucial for potent interaction with nAChR region.

This sequence belongs to the conotoxin A superfamily. Expressed by the salivary gland.

The protein localises to the secreted. Its function is as follows. Alpha-conopeptides-like may act on postsynaptic membranes, they bind to the nicotinic acetylcholine receptors (nAChR) and thus inhibit them. Has possibly a distinct nAChR binding mode from other alpha-conotoxins, due to a different three residue motif (lacks the Ser-Xaa-Pro motif). The protein is Alpha-conotoxin-like PuSG1.2 of Conus pulicarius (Flea-bitten cone).